Consider the following 326-residue polypeptide: Immune-associated nucleotide-binding protein 4 (326 aa).

One can recognise an AIG1-type G domain in the interval 17-225 (EPIKNIVLVG…FTDEMHRKIQ (209 aa)). The interval 26-33 (GRTGNGKS) is G1. Residues 26 to 34 (GRTGNGKSA) and S47 each bind GTP. The interval 53 to 57 (GVTMK) is G2. The interval 75–78 (DTPG) is G3. Positions 145–148 (TGGD) are G4. Residues 184-186 (DNR) are G5. Residue N185 coordinates GTP. A coiled-coil region spans residues 217-241 (TDEMHRKIQKEAETLREQQKEVESK).

Belongs to the TRAFAC class TrmE-Era-EngA-EngB-Septin-like GTPase superfamily. AIG1/Toc34/Toc159-like paraseptin GTPase family. IAN subfamily. As to expression, expressed in radicles of the germinating seeds.

This Arabidopsis thaliana (Mouse-ear cress) protein is Immune-associated nucleotide-binding protein 4.